Here is a 754-residue protein sequence, read N- to C-terminus: 5-methyltetrahydropteroyltriglutamate--homocysteine methyltransferase (754 aa).

Residues 19 to 22 and Lys121 contribute to the 5-methyltetrahydropteroyltri-L-glutamate site; that span reads RELK. L-homocysteine-binding positions include 423-425 and Glu476; that span reads IGS. L-methionine contacts are provided by residues 423–425 and Glu476; that span reads IGS. 5-methyltetrahydropteroyltri-L-glutamate-binding positions include 507 to 508 and Trp553; that span reads RC. Residue Asp591 participates in L-homocysteine binding. Asp591 is an L-methionine binding site. 5-methyltetrahydropteroyltri-L-glutamate is bound at residue Glu597. Zn(2+)-binding residues include His633, Cys635, and Glu657. His686 acts as the Proton donor in catalysis. Cys718 contacts Zn(2+).

Belongs to the vitamin-B12 independent methionine synthase family. Zn(2+) is required as a cofactor.

The enzyme catalyses 5-methyltetrahydropteroyltri-L-glutamate + L-homocysteine = tetrahydropteroyltri-L-glutamate + L-methionine. Its pathway is amino-acid biosynthesis; L-methionine biosynthesis via de novo pathway; L-methionine from L-homocysteine (MetE route): step 1/1. In terms of biological role, catalyzes the transfer of a methyl group from 5-methyltetrahydrofolate to homocysteine resulting in methionine formation. In Corynebacterium efficiens (strain DSM 44549 / YS-314 / AJ 12310 / JCM 11189 / NBRC 100395), this protein is 5-methyltetrahydropteroyltriglutamate--homocysteine methyltransferase.